Here is a 474-residue protein sequence, read N- to C-terminus: Aspartyl/glutamyl-tRNA(Asn/Gln) amidotransferase subunit B (474 aa).

This sequence belongs to the GatB/GatE family. GatB subfamily. Heterotrimer of A, B and C subunits.

It carries out the reaction L-glutamyl-tRNA(Gln) + L-glutamine + ATP + H2O = L-glutaminyl-tRNA(Gln) + L-glutamate + ADP + phosphate + H(+). The catalysed reaction is L-aspartyl-tRNA(Asn) + L-glutamine + ATP + H2O = L-asparaginyl-tRNA(Asn) + L-glutamate + ADP + phosphate + 2 H(+). Its function is as follows. Allows the formation of correctly charged Asn-tRNA(Asn) or Gln-tRNA(Gln) through the transamidation of misacylated Asp-tRNA(Asn) or Glu-tRNA(Gln) in organisms which lack either or both of asparaginyl-tRNA or glutaminyl-tRNA synthetases. The reaction takes place in the presence of glutamine and ATP through an activated phospho-Asp-tRNA(Asn) or phospho-Glu-tRNA(Gln). The polypeptide is Aspartyl/glutamyl-tRNA(Asn/Gln) amidotransferase subunit B (Wolbachia sp. subsp. Brugia malayi (strain TRS)).